Reading from the N-terminus, the 196-residue chain is Cell division protein SepF (196 aa).

Positions 15-80 (VEDDEEFNEP…PKRSASTFSK (66 aa)) are disordered. Residues 56–79 (RPAQSTPKPQAQTAAPKRSASTFS) show a composition bias toward polar residues.

It belongs to the SepF family. As to quaternary structure, homodimer. Interacts with FtsZ.

The protein resides in the cytoplasm. Cell division protein that is part of the divisome complex and is recruited early to the Z-ring. Probably stimulates Z-ring formation, perhaps through the cross-linking of FtsZ protofilaments. Its function overlaps with FtsA. This is Cell division protein SepF from Lactococcus lactis subsp. cremoris (strain SK11).